A 132-amino-acid polypeptide reads, in one-letter code: Large ribosomal subunit protein uL22c (132 aa).

This sequence belongs to the universal ribosomal protein uL22 family. As to quaternary structure, part of the 50S ribosomal subunit.

Its subcellular location is the plastid. It is found in the chloroplast. In terms of biological role, this protein binds specifically to 23S rRNA. Its function is as follows. The globular domain of the protein is located near the polypeptide exit tunnel on the outside of the subunit, while an extended beta-hairpin is found that lines the wall of the exit tunnel in the center of the 70S ribosome. The chain is Large ribosomal subunit protein uL22c (rpl22) from Populus alba (White poplar).